Reading from the N-terminus, the 348-residue chain is MSLAEINKNEVDIVIGALNADLTQFLTSWRPFFSGFHLIVVKDPELKEELNIPEGFDVDVYSKTDMEKVVGASNSTMFSGYSCRYFGYLVSKKKYIVSIDDDCVPAKDPKGFLVDAVTQHVINLENPATPLFFNTLYDPYCEGADFVRGYPFSLRSGVPCAASCGLWLNLADLDAPTQALKTEKRNTAYVDAVMTVPAKAMLPISGINIAFNRELVGPALVPALRLAGEGKVRWETLEDVWCGMCLKHISDHLGYGVKTGLPYVWRNERGDAVESLRKKWEGMKLMEKSVPFFDSLKLPETALKVEDCVIELAKAVKEQLGSDDPAFTQAADAMVKWVQLWNSVNSSA.

The short motif at D100 to D102 is the DXD motif element. R148 carries an N-linked (Glc...) arginine glycan.

It belongs to the RGP family. In terms of assembly, heteromers with RGP1 and RGP2. Mn(2+) is required as a cofactor. It depends on Mg(2+) as a cofactor. In terms of processing, reversibly glycosylated in vitro by UDP-glucose, UDP-xylose and UDP-galactose, but not UDP-mannose. As to expression, widely expressed at low levels.

It localises to the cytoplasm. The protein resides in the cytosol. Its subcellular location is the golgi apparatus. It catalyses the reaction UDP-beta-L-arabinofuranose = UDP-beta-L-arabinopyranose. Functionally, probable UDP-L-arabinose mutase involved in the biosynthesis of cell wall non-cellulosic polysaccharides. The sequence is that of Probable UDP-arabinopyranose mutase 5 from Arabidopsis thaliana (Mouse-ear cress).